A 292-amino-acid polypeptide reads, in one-letter code: NAC domain-containing protein 96 (292 aa).

The NAC domain maps to 6–158 (LPPGFRFHPT…AFVLCRVAMK (153 aa)). A DNA-binding region spans residues 106 to 164 (IGYRKTLVFYKGRAPLGDRSNWIMHEYRLCDDDTSQGSQNLKGAFVLCRVAMKNEIKTN). The segment at 171–199 (PSEQTIGSGESSGLSSRVTSPSRDETMPF) is disordered. Polar residues predominate over residues 172–191 (SEQTIGSGESSGLSSRVTSP).

In terms of assembly, interacts with ABF2 and ABF4. In terms of tissue distribution, expressed in roots, rosettes leaves, cauline leaves and stems.

It localises to the nucleus. Its function is as follows. Transcriptional activator involved in the positive regulation of abscisic acid (ABA) responsive genes. Acts as a positive factor of ABA-mediated responses. Involved in the transcriptional activation of ABA-inducible genes in response to dehydration and osmotic stresses. Plays a positive role in both stomatal closure and water loss under dehydration stress conditions. Acts synergistically with ABF2 to activate the dehydration stress-response factor RD29A transcription. Binds to the consensus core cis-acting elements 5'-CGTA-3' and 5'-CACG-3' at the RD29A promoter. Involved in hypocotyl graft union formation. Required for the auxin-mediated promotion of vascular tissue proliferation during hypocotyl graft attachment. In Arabidopsis thaliana (Mouse-ear cress), this protein is NAC domain-containing protein 96.